We begin with the raw amino-acid sequence, 237 residues long: Putative exosome complex component rrp40 (237 aa).

One can recognise an S1 motif domain in the interval 67 to 137 (EDMVIGTIIE…EPEVVCLSQK (71 aa)).

The protein belongs to the RRP40 family. In terms of assembly, component of the RNA exosome complex.

It localises to the cytoplasm. The protein resides in the nucleus. Its subcellular location is the nucleolus. In terms of biological role, non-catalytic component of the RNA exosome complex which has 3'-&gt;5' exoribonuclease activity and participates in a multitude of cellular RNA processing and degradation events. The chain is Putative exosome complex component rrp40 (exosc3) from Dictyostelium discoideum (Social amoeba).